A 362-amino-acid polypeptide reads, in one-letter code: Class I histocompatibility antigen, Gogo-B*0102 alpha chain (362 aa).

An N-terminal signal peptide occupies residues 1-24 (MRVTAPRTLLLLLSAALALTETWA). The interval 25–114 (GSHSMRYFDT…ALRYYNQSEA (90 aa)) is alpha-1. Topologically, residues 25–308 (GSHSMRYFDT…EPSSQSTIPI (284 aa)) are extracellular. An N-linked (GlcNAc...) asparagine glycan is attached at Asn110. The interval 115 to 206 (GSHTFQRMFG…ENGRETLQRA (92 aa)) is alpha-2. Intrachain disulfides connect Cys125–Cys188 and Cys227–Cys283. The interval 207–298 (DTPKTHVTHH…GLPKPLTLRW (92 aa)) is alpha-3. The Ig-like C1-type domain maps to 209-295 (PKTHVTHHPI…QHEGLPKPLT (87 aa)). Residues 299–308 (EPSSQSTIPI) are connecting peptide. The helical transmembrane segment at 309-332 (VGIVAGLAVLAVVVIGAVVTAVIC) threads the bilayer. Topologically, residues 333-362 (RRKSSGGKGGSYSQAASSDSAQGSDVSLTA) are cytoplasmic. The disordered stretch occupies residues 335-362 (KSSGGKGGSYSQAASSDSAQGSDVSLTA). Residues 343 to 362 (SYSQAASSDSAQGSDVSLTA) show a composition bias toward low complexity.

It belongs to the MHC class I family. In terms of assembly, heterodimer of an alpha chain and a beta chain (beta-2-microglobulin).

The protein resides in the membrane. In terms of biological role, involved in the presentation of foreign antigens to the immune system. The sequence is that of Class I histocompatibility antigen, Gogo-B*0102 alpha chain from Gorilla gorilla gorilla (Western lowland gorilla).